A 103-amino-acid chain; its full sequence is Phosphoribosyl-ATP pyrophosphatase (103 aa).

A disordered region spans residues 79–103; sequence SVQAELERREGKLSTTRDRKEIDEL. A compositionally biased stretch (basic and acidic residues) spans 83 to 103; the sequence is ELERREGKLSTTRDRKEIDEL.

Belongs to the PRA-PH family.

It localises to the cytoplasm. It carries out the reaction 1-(5-phospho-beta-D-ribosyl)-ATP + H2O = 1-(5-phospho-beta-D-ribosyl)-5'-AMP + diphosphate + H(+). Its pathway is amino-acid biosynthesis; L-histidine biosynthesis; L-histidine from 5-phospho-alpha-D-ribose 1-diphosphate: step 2/9. This chain is Phosphoribosyl-ATP pyrophosphatase, found in Listeria welshimeri serovar 6b (strain ATCC 35897 / DSM 20650 / CCUG 15529 / CIP 8149 / NCTC 11857 / SLCC 5334 / V8).